The primary structure comprises 382 residues: Secreted RxLR effector protein 118 (382 aa).

A signal peptide spans 1-21 (MRGAYYVTIALLVVASSQISA). A RxLR-dEER motif is present at residues 48 to 65 (RSLRGSRDVSNDVAIEER). Positions 308–382 (MNKASTSKGK…AVTSLSSISN (75 aa)) are disordered. Positions 310-323 (KASTSKGKSSVFTR) are enriched in polar residues.

This sequence belongs to the RxLR effector family.

Its subcellular location is the secreted. The protein resides in the host nucleus. In terms of biological role, secreted effector that completely suppresses the host cell death induced by cell death-inducing proteins. The polypeptide is Secreted RxLR effector protein 118 (Plasmopara viticola (Downy mildew of grapevine)).